The primary structure comprises 461 residues: Glycine--tRNA ligase (461 aa).

Residues arginine 99 and glutamate 173 each contribute to the substrate site. ATP-binding positions include 205–207 (RNE), 215–220 (FRTREF), 289–290 (EL), and 333–336 (GADR). 220–224 (FEQME) is a substrate binding site. 329–333 (EPSLG) is a binding site for substrate.

This sequence belongs to the class-II aminoacyl-tRNA synthetase family. In terms of assembly, homodimer.

It localises to the cytoplasm. The catalysed reaction is tRNA(Gly) + glycine + ATP = glycyl-tRNA(Gly) + AMP + diphosphate. Catalyzes the attachment of glycine to tRNA(Gly). The sequence is that of Glycine--tRNA ligase from Lysinibacillus sphaericus (strain C3-41).